The following is a 38-amino-acid chain: Alpha-amylase (38 aa).

It belongs to the glycosyl hydrolase 13 family. In terms of assembly, monomer. The cofactor is Ca(2+). Chloride serves as cofactor. As to expression, expressed by the venom gland.

The protein localises to the secreted. The enzyme catalyses Endohydrolysis of (1-&gt;4)-alpha-D-glucosidic linkages in polysaccharides containing three or more (1-&gt;4)-alpha-linked D-glucose units.. The protein is Alpha-amylase of Tityus serrulatus (Brazilian scorpion).